The following is a 109-amino-acid chain: Large ribosomal subunit protein uL22 (109 aa).

It belongs to the universal ribosomal protein uL22 family. Part of the 50S ribosomal subunit.

In terms of biological role, this protein binds specifically to 23S rRNA; its binding is stimulated by other ribosomal proteins, e.g. L4, L17, and L20. It is important during the early stages of 50S assembly. It makes multiple contacts with different domains of the 23S rRNA in the assembled 50S subunit and ribosome. Its function is as follows. The globular domain of the protein is located near the polypeptide exit tunnel on the outside of the subunit, while an extended beta-hairpin is found that lines the wall of the exit tunnel in the center of the 70S ribosome. The sequence is that of Large ribosomal subunit protein uL22 from Blochmanniella pennsylvanica (strain BPEN).